A 399-amino-acid chain; its full sequence is Elongation factor Tu (399 aa).

In terms of domain architecture, tr-type G spans 10 to 204; it reads KPHVNIGTIG…AVDSSIPEPE (195 aa). Residues 19 to 26 form a G1 region; the sequence is GHVDHGKT. 19–26 contributes to the GTP binding site; the sequence is GHVDHGKT. Thr26 is a binding site for Mg(2+). Positions 60–64 are G2; sequence GITIN. A G3 region spans residues 81 to 84; that stretch reads DCPG. Residues 81–85 and 136–139 each bind GTP; these read DCPGH and NKCD. The G4 stretch occupies residues 136–139; that stretch reads NKCD. Residues 174–176 form a G5 region; it reads SGL.

Belongs to the TRAFAC class translation factor GTPase superfamily. Classic translation factor GTPase family. EF-Tu/EF-1A subfamily. In terms of assembly, monomer.

The protein resides in the cytoplasm. It carries out the reaction GTP + H2O = GDP + phosphate + H(+). Its function is as follows. GTP hydrolase that promotes the GTP-dependent binding of aminoacyl-tRNA to the A-site of ribosomes during protein biosynthesis. This is Elongation factor Tu from Synechococcus sp. (strain CC9605).